Here is a 306-residue protein sequence, read N- to C-terminus: MDTLDRVVKPKTKRAKRFLEKREPKLNENIKNAMLIKGGNANATVTKVLKDVYALKKPYGVLYKKKNITRPFEDQTSLEFFSKKSDCSLFMFGSHNKKRPNNLVIGRMYDYHVLDMIELGIENFVSLKDIKNSKCPEGTKPMLIFAGDDFDVTEDYRRLKSLLIDFFRGPTVSNIRLAGLEYVLHFTALNGKIYFRSYKLLLKKSGCRTPRIELEEMGPSLDLVLRRTHLASDDLYKLSMKMPKALKPKKKKNISHDTFGTTYGRIHMQKQDLSKLQTRKMKGLKKRPAERITEDHEKKSKRIKKN.

In terms of domain architecture, Brix spans 31–234 (KNAMLIKGGN…LRRTHLASDD (204 aa)). Positions 270-306 (KQDLSKLQTRKMKGLKKRPAERITEDHEKKSKRIKKN) are disordered. Residues 277–286 (QTRKMKGLKK) show a composition bias toward basic residues. A compositionally biased stretch (basic and acidic residues) spans 287 to 298 (RPAERITEDHEK).

Belongs to the RPF2 family. In terms of assembly, component of a hexameric 5S RNP precursor complex, composed of 5S RNA, RRS1, RPF2/BXDC1, RPL5, RPL11 and HEATR3; this complex acts as a precursor for ribosome assembly.

It localises to the nucleus. Its subcellular location is the nucleolus. Its function is as follows. Involved in ribosomal large subunit assembly. May regulate the localization of the 5S RNP/5S ribonucleoprotein particle to the nucleolus. The polypeptide is Ribosome production factor 2 homolog (RPF2) (Homo sapiens (Human)).